The chain runs to 298 residues: Glutamyl-Q tRNA(Asp) synthetase (298 aa).

L-glutamate contacts are provided by residues 9 to 13 (RFAPS) and E45. The 'HIGH' region signature appears at 12–22 (PSPSGELHFGS). Residues C101, C103, Y115, and C119 each coordinate Zn(2+). L-glutamate-binding residues include Y172 and R190. The short motif at 228–232 (KLSKQ) is the 'KMSKS' region element. K231 serves as a coordination point for ATP.

Belongs to the class-I aminoacyl-tRNA synthetase family. GluQ subfamily. Zn(2+) serves as cofactor.

Functionally, catalyzes the tRNA-independent activation of glutamate in presence of ATP and the subsequent transfer of glutamate onto a tRNA(Asp). Glutamate is transferred on the 2-amino-5-(4,5-dihydroxy-2-cyclopenten-1-yl) moiety of the queuosine in the wobble position of the QUC anticodon. The sequence is that of Glutamyl-Q tRNA(Asp) synthetase from Salmonella paratyphi A (strain ATCC 9150 / SARB42).